The following is a 174-amino-acid chain: Interleukin-1 receptor antagonist protein (174 aa).

The first 23 residues, 1–23, serve as a signal peptide directing secretion; it reads MDIYIHGYLICLLLFLFRSETAC. A disulfide bridge links cysteine 89 with cysteine 139. N-linked (GlcNAc...) asparagine glycosylation is present at asparagine 107.

Belongs to the IL-1 family.

The protein localises to the secreted. Functionally, anti-inflammatory antagonist of interleukin-1 family of proinflammatory cytokines such as interleukin-1beta/IL1B and interleukin-1alpha/IL1A. Protects from immune dysregulation and uncontrolled systemic inflammation triggered by IL1 for a range of innate stimulatory agents such as pathogens. This chain is Interleukin-1 receptor antagonist protein (IL1RN), found in Bos taurus (Bovine).